The chain runs to 80 residues: Saposin-B-Val (80 aa).

A Saposin B-type domain is found at 1 to 80 (GDVCQDCIQM…CGLVGFCEEV (80 aa)). Cystine bridges form between Cys4–Cys77, Cys7–Cys71, and Cys36–Cys47. N-linked (GlcNAc...) (complex) asparagine glycosylation is present at Asn21.

Saposin-B is a homodimer. Interacts with GRN; facilitates lysosomal delivery of progranulin from the extracellular space and the biosynthetic pathway. The one residue extended Saposin-B-Val is only found in a minority of the chains.

In terms of biological role, saposin-B stimulates the hydrolysis of galacto-cerebroside sulfate by arylsulfatase A (EC 3.1.6.8), GM1 gangliosides by beta-galactosidase (EC 3.2.1.23) and globotriaosylceramide by alpha-galactosidase A (EC 3.2.1.22). Saposin-B forms a solubilizing complex with the substrates of the sphingolipid hydrolases. The polypeptide is Saposin-B-Val (PSAP) (Sus scrofa (Pig)).